Consider the following 262-residue polypeptide: Acyl-[acyl-carrier-protein]--UDP-N-acetylglucosamine O-acyltransferase (262 aa).

This sequence belongs to the transferase hexapeptide repeat family. LpxA subfamily. In terms of assembly, homotrimer.

It is found in the cytoplasm. It carries out the reaction a (3R)-hydroxyacyl-[ACP] + UDP-N-acetyl-alpha-D-glucosamine = a UDP-3-O-[(3R)-3-hydroxyacyl]-N-acetyl-alpha-D-glucosamine + holo-[ACP]. The protein operates within glycolipid biosynthesis; lipid IV(A) biosynthesis; lipid IV(A) from (3R)-3-hydroxytetradecanoyl-[acyl-carrier-protein] and UDP-N-acetyl-alpha-D-glucosamine: step 1/6. Its function is as follows. Involved in the biosynthesis of lipid A, a phosphorylated glycolipid that anchors the lipopolysaccharide to the outer membrane of the cell. The chain is Acyl-[acyl-carrier-protein]--UDP-N-acetylglucosamine O-acyltransferase from Photorhabdus laumondii subsp. laumondii (strain DSM 15139 / CIP 105565 / TT01) (Photorhabdus luminescens subsp. laumondii).